Reading from the N-terminus, the 233-residue chain is Aspartate/glutamate leucyltransferase (233 aa).

Belongs to the R-transferase family. Bpt subfamily.

The protein localises to the cytoplasm. It carries out the reaction N-terminal L-glutamyl-[protein] + L-leucyl-tRNA(Leu) = N-terminal L-leucyl-L-glutamyl-[protein] + tRNA(Leu) + H(+). It catalyses the reaction N-terminal L-aspartyl-[protein] + L-leucyl-tRNA(Leu) = N-terminal L-leucyl-L-aspartyl-[protein] + tRNA(Leu) + H(+). Its function is as follows. Functions in the N-end rule pathway of protein degradation where it conjugates Leu from its aminoacyl-tRNA to the N-termini of proteins containing an N-terminal aspartate or glutamate. The chain is Aspartate/glutamate leucyltransferase from Vibrio cholerae serotype O1 (strain ATCC 39541 / Classical Ogawa 395 / O395).